The chain runs to 294 residues: 33 kDa chaperonin (294 aa).

Intrachain disulfides connect cysteine 238/cysteine 240 and cysteine 271/cysteine 274.

It belongs to the HSP33 family. Post-translationally, under oxidizing conditions two disulfide bonds are formed involving the reactive cysteines. Under reducing conditions zinc is bound to the reactive cysteines and the protein is inactive.

The protein resides in the cytoplasm. Its function is as follows. Redox regulated molecular chaperone. Protects both thermally unfolding and oxidatively damaged proteins from irreversible aggregation. Plays an important role in the bacterial defense system toward oxidative stress. This chain is 33 kDa chaperonin, found in Staphylococcus haemolyticus (strain JCSC1435).